Here is a 1007-residue protein sequence, read N- to C-terminus: Rho-type GTPase-activating protein 1 (1007 aa).

2 consecutive LIM zinc-binding domains span residues 13–66 (CVRC…CFDC) and 70–122 (CKNC…CLSC). Disordered stretches follow at residues 203 to 293 (ITGY…KSPS), 401 to 478 (EKYS…STSL), and 505 to 600 (KETA…NDPS). Positions 212 to 221 (NSGSSKFGSN) are enriched in low complexity. 2 stretches are compositionally biased toward polar residues: residues 250–261 (ANMSLNVATDPT) and 270–293 (HSRN…KSPS). The residue at position 278 (threonine 278) is a Phosphothreonine. Serine 291 carries the post-translational modification Phosphoserine. A compositionally biased stretch (basic residues) spans 411 to 421 (KGRKISRSLSR). Over residues 454-466 (RSQDLMRDNDSHT) the composition is skewed to basic and acidic residues. 2 stretches are compositionally biased toward polar residues: residues 467–478 (GLDTPNSNSTSL) and 529–579 (SPAT…LENS). At threonine 532 the chain carries Phosphothreonine. Residues 583–600 (EEQKETLYENSESRNDPS) show a composition bias toward basic and acidic residues. Residues 791–1006 (SSLVARCNYE…FIFGNYKDIL (216 aa)) enclose the Rho-GAP domain.

Functionally, GTPase-activating protein (GAP) for CDC42 and/or RHO1. Negative regulator of the pheromone-response pathway through the STE20 protein kinase; acts at a step between the G-protein and the MAP kinase module. Dominant suppressor of bud emergence defect caused by deletion of IPL2/BEM2. Involved in the control of polarized cell growth and proper bud site selection. This is Rho-type GTPase-activating protein 1 (RGA1) from Saccharomyces cerevisiae (strain ATCC 204508 / S288c) (Baker's yeast).